A 183-amino-acid polypeptide reads, in one-letter code: SAYSvFN domain-containing protein 1 (183 aa).

At 1–105 (MEQRLAEFRA…SFLTNITFLK (105 aa)) the chain is on the cytoplasmic side. The segment at 11-36 (ARKRAGLAAQPPAASQGAQTPGEKAE) is disordered. Residues 16–36 (GLAAQPPAASQGAQTPGEKAE) show a composition bias toward low complexity. Residues 91-105 (SCWDQSFLTNITFLK) are middle helical (MH). The helical intramembrane region spans 106–126 (VLLWLVLLGLFVELEFGLAYF). Residues 127 to 183 (VLSLFYWMYVGTRGPEEKKEGEKSAYSVFNPGCEAIQGTLTAEQLERELQLRPLAGR) lie on the Cytoplasmic side of the membrane.

It belongs to the SAYSD1 family. Associates (via N-terminus) with ribosomes.

It is found in the endoplasmic reticulum membrane. The protein resides in the cytoplasmic vesicle membrane. In terms of biological role, ufmylation 'reader' component of a translocation-associated quality control pathway, a mechanism that takes place when a ribosome has stalled during translation, and which is required to degrade clogged substrates. Specifically recognizes and binds ufmylated ribosomes when a ribosome has stalled, promoting the transport of stalled nascent chain via the TRAPP complex to lysosomes for degradation. The polypeptide is SAYSvFN domain-containing protein 1 (Homo sapiens (Human)).